Consider the following 348-residue polypeptide: VIP36-like protein (348 aa).

The N-terminal stretch at Met-1–Ala-44 is a signal peptide. Residues Gly-45–Ala-313 lie on the Lumenal side of the membrane. In terms of domain architecture, L-type lectin-like spans Glu-49–Leu-274. Ser-93 and Asp-128 together coordinate a carbohydrate. Ca(2+) contacts are provided by Asp-159, Tyr-161, and Asn-163. Tyr-161–Asn-163 provides a ligand contact to a carbohydrate. The N-linked (GlcNAc...) (high mannose) asparagine glycan is linked to Asn-181. Residue His-188 participates in a carbohydrate binding. Asp-191 provides a ligand contact to Ca(2+). Cys-200 and Cys-237 form a disulfide bridge. Gly-258–Leu-260 contributes to the a carbohydrate binding site. A helical membrane pass occupies residues Leu-314–Tyr-336. At Asn-337–Tyr-348 the chain is on the cytoplasmic side. Positions Arg-344–Arg-346 match the Endoplasmic reticulum retention signal motif.

As to expression, expressed in numerous tissues. Highest expression in skeletal muscle and kidney, intermediate levels in heart, liver and placenta, low levels in brain, thymus, spleen, small intestine and lung.

The protein localises to the endoplasmic reticulum membrane. It is found in the golgi apparatus membrane. In terms of biological role, may be involved in the regulation of export from the endoplasmic reticulum of a subset of glycoproteins. May function as a regulator of ERGIC-53. The polypeptide is VIP36-like protein (LMAN2L) (Homo sapiens (Human)).